A 312-amino-acid chain; its full sequence is Ornithine carbamoyltransferase (312 aa).

Residues 50-53 (STRT), Gln-77, Arg-101, and 128-131 (HPCQ) each bind carbamoyl phosphate. Residues Asn-160, Asp-224, and 228–229 (SM) each bind L-ornithine. Residues 264-265 (CL) and Arg-292 contribute to the carbamoyl phosphate site.

Belongs to the aspartate/ornithine carbamoyltransferase superfamily. OTCase family.

It is found in the cytoplasm. It carries out the reaction carbamoyl phosphate + L-ornithine = L-citrulline + phosphate + H(+). Its pathway is amino-acid biosynthesis; L-arginine biosynthesis; L-arginine from L-ornithine and carbamoyl phosphate: step 1/3. Its function is as follows. Reversibly catalyzes the transfer of the carbamoyl group from carbamoyl phosphate (CP) to the N(epsilon) atom of ornithine (ORN) to produce L-citrulline. In Leifsonia xyli subsp. xyli (strain CTCB07), this protein is Ornithine carbamoyltransferase.